A 313-amino-acid polypeptide reads, in one-letter code: Porphobilinogen deaminase (313 aa).

Cys249 is modified (S-(dipyrrolylmethanemethyl)cysteine).

It belongs to the HMBS family. Monomer. The cofactor is dipyrromethane.

It carries out the reaction 4 porphobilinogen + H2O = hydroxymethylbilane + 4 NH4(+). Its pathway is porphyrin-containing compound metabolism; protoporphyrin-IX biosynthesis; coproporphyrinogen-III from 5-aminolevulinate: step 2/4. Its function is as follows. Tetrapolymerization of the monopyrrole PBG into the hydroxymethylbilane pre-uroporphyrinogen in several discrete steps. The protein is Porphobilinogen deaminase of Paracoccus denitrificans (strain Pd 1222).